The sequence spans 281 residues: CLA biosynthesis isomerase (281 aa).

It belongs to the ADC family.

Its subcellular location is the cytoplasm. The enzyme catalyses 10-oxo-(12Z)-octadecenoate = 10-oxo-(11E)-octadecenoate. It participates in lipid metabolism; fatty acid metabolism. In terms of biological role, is involved in a saturation metabolic pathway of polyunsaturated fatty acids, that detoxifies unsaturated fatty acids and generates hydroxy fatty acids, oxo fatty acids, conjugated fatty acids such as conjugated linoleic acids (CLAs), and partially saturated trans-fatty acids as intermediates. CLA-DC catalyzes the migration of the carbon-carbon double bond in 10-oxo-(12Z)-octadecenoate to produce 10-oxo-(11E)-octadecenoate, during linoleate metabolism. As part of the gut microbiome, this enzyme modifies host fatty acid composition and is expected to improve human health by altering lipid metabolism related to the onset of metabolic syndrome. This is CLA biosynthesis isomerase from Lactiplantibacillus plantarum (Lactobacillus plantarum).